Here is a 163-residue protein sequence, read N- to C-terminus: NADH-quinone oxidoreductase subunit I (163 aa).

4Fe-4S ferredoxin-type domains follow at residues Leu53–Gly83 and Thr94–Glu123. 8 residues coordinate [4Fe-4S] cluster: Cys63, Cys66, Cys69, Cys73, Cys103, Cys106, Cys109, and Cys113.

This sequence belongs to the complex I 23 kDa subunit family. As to quaternary structure, NDH-1 is composed of 14 different subunits. Subunits NuoA, H, J, K, L, M, N constitute the membrane sector of the complex. [4Fe-4S] cluster is required as a cofactor.

The protein resides in the cell inner membrane. The catalysed reaction is a quinone + NADH + 5 H(+)(in) = a quinol + NAD(+) + 4 H(+)(out). In terms of biological role, NDH-1 shuttles electrons from NADH, via FMN and iron-sulfur (Fe-S) centers, to quinones in the respiratory chain. The immediate electron acceptor for the enzyme in this species is believed to be ubiquinone. Couples the redox reaction to proton translocation (for every two electrons transferred, four hydrogen ions are translocated across the cytoplasmic membrane), and thus conserves the redox energy in a proton gradient. In Coxiella burnetii (strain Dugway 5J108-111), this protein is NADH-quinone oxidoreductase subunit I.